The following is a 526-amino-acid chain: Cyclin-L1 (526 aa).

The tract at residues 1–36 (MASGPHSTATAAAAASSAAPSAGGSSSGTTTTTTTT) is disordered. Cyclin-like regions lie at residues 88-190 (ELIQ…RVLK) and 203-287 (KIIV…ETLR). The interval 318 to 526 (KGLNPDGTPA…SRSGHGRHRR (209 aa)) is disordered. A Phosphothreonine modification is found at Thr-325. Phosphoserine is present on residues Ser-335 and Ser-338. Glycyl lysine isopeptide (Lys-Gly) (interchain with G-Cter in SUMO2) cross-links involve residues Lys-339 and Lys-347. Over residues 342 to 352 (SPREVKAEEKS) the composition is skewed to basic and acidic residues. Ser-352 and Ser-355 each carry phosphoserine. Residues 361 to 370 (VKKEPEDRQQ) are compositionally biased toward basic and acidic residues. A Glycyl lysine isopeptide (Lys-Gly) (interchain with G-Cter in SUMO2) cross-link involves residue Lys-362. Position 374 is a phosphoserine (Ser-374). Basic residues-rich tracts occupy residues 382 to 418 (DSKR…RRSR), 438 to 452 (RRHH…KAKH), 460 to 476 (SNRH…RSQS), and 486 to 498 (KKHR…HRDR). The tract at residues 390-432 (RSASRSRSRTRSRSRSHTPRRHYNNRRSRSGTYSSRSRSRSRS) is RS. Ser-445 is subject to Phosphoserine. The span at 499–508 (RERSRSFERS) shows a compositional bias: basic and acidic residues. Basic residues predominate over residues 509-526 (HKSKHHGGSRSGHGRHRR).

It belongs to the cyclin family. Cyclin L subfamily. In terms of assembly, (Microbial infection) Interacts with human herpes virus 1 (HHV-1) transcriptional regulator ICP22. Interacts with POLR2A via its hyperphosphorylated C-terminal domain (CTD). Interacts with CDK11A, CDK12 and CDK13. Isoforms 1 and 2, but not isoform 3, interact with CDK11B. May form a ternary complex with CDK11B and casein kinase II (CKII). Interacts with pre-mRNA-splicing factors, including at least SRSF1, SRSF2 and SRSF7/SLU7. As to expression, widely expressed. Overexpression in primary tumors of head and neck squamous cell carcinomas (HNSCC).

Its subcellular location is the nucleus speckle. The protein localises to the nucleus. The protein resides in the nucleoplasm. Its function is as follows. Involved in pre-mRNA splicing. Functions in association with cyclin-dependent kinases (CDKs). Inhibited by the CDK-specific inhibitor CDKN1A/p21. May play a role in the regulation of RNA polymerase II (pol II). May be a candidate proto-oncogene in head and neck squamous cell carcinomas (HNSCC). This chain is Cyclin-L1 (CCNL1), found in Homo sapiens (Human).